Here is a 170-residue protein sequence, read N- to C-terminus: Ribosome maturation factor RimM (170 aa).

A PRC barrel domain is found at 97–170 (HPDEYYWVDL…RIVVDWDPEF (74 aa)).

Belongs to the RimM family. As to quaternary structure, binds ribosomal protein uS19.

The protein localises to the cytoplasm. In terms of biological role, an accessory protein needed during the final step in the assembly of 30S ribosomal subunit, possibly for assembly of the head region. Essential for efficient processing of 16S rRNA. May be needed both before and after RbfA during the maturation of 16S rRNA. It has affinity for free ribosomal 30S subunits but not for 70S ribosomes. This Xylella fastidiosa (strain M23) protein is Ribosome maturation factor RimM.